A 191-amino-acid chain; its full sequence is Putative manganese efflux pump MntP (191 aa).

Helical transmembrane passes span 3 to 23 (PISI…AAIG), 37 to 57 (LRAG…GWLL), 65 to 85 (VEAF…IHMI), 107 to 129 (WKLA…GLAF), 144 to 164 (CTLT…SMVG), and 169 to 189 (IIGG…HLHG).

This sequence belongs to the MntP (TC 9.B.29) family.

It localises to the cell inner membrane. In terms of biological role, probably functions as a manganese efflux pump. The sequence is that of Putative manganese efflux pump MntP from Stenotrophomonas maltophilia (strain R551-3).